Consider the following 239-residue polypeptide: Ribonuclease 3 (239 aa).

Residues 12-137 form the RNase III domain; sequence RAKLEALIGH…LIAAIYLDGG (126 aa). Residue glutamate 50 participates in Mg(2+) binding. Aspartate 54 is a catalytic residue. Residues aspartate 123 and glutamate 126 each coordinate Mg(2+). Glutamate 126 is an active-site residue. A DRBM domain is found at 162–231; that stretch reads DAKTELQEWS…ATKMLEREGI (70 aa).

Belongs to the ribonuclease III family. As to quaternary structure, homodimer. The cofactor is Mg(2+).

The protein resides in the cytoplasm. It carries out the reaction Endonucleolytic cleavage to 5'-phosphomonoester.. In terms of biological role, digests double-stranded RNA. Involved in the processing of primary rRNA transcript to yield the immediate precursors to the large and small rRNAs (23S and 16S). Processes some mRNAs, and tRNAs when they are encoded in the rRNA operon. Processes pre-crRNA and tracrRNA of type II CRISPR loci if present in the organism. In Rhizobium etli (strain ATCC 51251 / DSM 11541 / JCM 21823 / NBRC 15573 / CFN 42), this protein is Ribonuclease 3.